Consider the following 176-residue polypeptide: RNA 2',3'-cyclic phosphodiesterase (176 aa).

The active-site Proton donor is H39. 2 consecutive short sequence motifs (HXTX) follow at residues 39 to 42 (HITL) and 122 to 125 (HLTV). Catalysis depends on H122, which acts as the Proton acceptor.

It belongs to the 2H phosphoesterase superfamily. ThpR family.

The catalysed reaction is a 3'-end 2',3'-cyclophospho-ribonucleotide-RNA + H2O = a 3'-end 2'-phospho-ribonucleotide-RNA + H(+). In terms of biological role, hydrolyzes RNA 2',3'-cyclic phosphodiester to an RNA 2'-phosphomonoester. The polypeptide is RNA 2',3'-cyclic phosphodiesterase (Archaeoglobus fulgidus (strain ATCC 49558 / DSM 4304 / JCM 9628 / NBRC 100126 / VC-16)).